We begin with the raw amino-acid sequence, 621 residues long: E3 SUMO-protein ligase PIAS2 (621 aa).

Residues 11-45 (VSSFRVSELQVLLGFAGRNKSGRKHDLLMRALHLL) form the SAP domain. Positions 19–23 (LQVLL) match the LXXLL motif motif. Residues Lys46 and Lys249 each participate in a glycyl lysine isopeptide (Lys-Gly) (interchain with G-Cter in SUMO2) cross-link. In terms of domain architecture, PINIT spans 134 to 299 (QPSPPIPPVH…SMSVYLVRQL (166 aa)). The SP-RING-type zinc finger occupies 331 to 412 (PDSEIATTSL…FMEILNDCSD (82 aa)). Residues Cys362, His364, Cys385, and Cys388 each coordinate Zn(2+). Residues Lys430, Lys435, Lys443, and Lys452 each participate in a glycyl lysine isopeptide (Lys-Gly) (interchain with G-Cter in SUMO2) cross-link. The segment at 467-473 (IDVIDLT) is SUMO1-binding. Phosphoserine is present on residues Ser476, Ser477, and Ser478. The Nuclear localization signal signature appears at 484–492 (PPAKRKCIF). Lys489 is covalently cross-linked (Glycyl lysine isopeptide (Lys-Gly) (interchain with G-Cter in SUMO2)). Ser499 carries the phosphoserine modification. Lys502 participates in a covalent cross-link: Glycyl lysine isopeptide (Lys-Gly) (interchain with G-Cter in SUMO2). Residues 577–610 (TASSTSVTTTSPHESSTHVSSSSSRSETGVITSS) show a composition bias toward low complexity. Positions 577-621 (TASSTSVTTTSPHESSTHVSSSSSRSETGVITSSGRNIPDIISLD) are disordered.

Belongs to the PIAS family. As to quaternary structure, binds SUMO1 and UBE2I. Interacts with AXIN1, JUN, MDM2, PARK7, TP53 and TP73 isoform alpha, but not TP73 isoform beta. Interacts with STAT4 following IL12 and IFN-alpha stimulation of T-cells. Interacts also with GTF2I, GTF2IRD1, IKFZ1, DAB2 and MSX2, as well as with several steroid receptors, including ESR1, ESR2, NR3C1, PGR, AR, and with NCOA2. Sumoylation of a target protein seems to enhance the interaction. Binds to sumoylated ELK1. Interacts with PLAG1. Binds DNA, such as CDKN1A promoter, in a sequence-specific manner. Interacts with KLF8; the interaction results in SUMO ligation and repression of KLF8 transcriptional activity and of its cell cycle progression into G(1) phase. Interacts with IFIH1/MDA5. Interacts with PML. Interacts with PRDM1. Post-translationally, sumoylated.

The protein localises to the nucleus speckle. The protein resides in the nucleus. Its subcellular location is the PML body. It carries out the reaction S-ubiquitinyl-[E2 ubiquitin-conjugating enzyme]-L-cysteine + [acceptor protein]-L-lysine = [E2 ubiquitin-conjugating enzyme]-L-cysteine + N(6)-ubiquitinyl-[acceptor protein]-L-lysine.. The protein operates within protein modification; protein sumoylation. Functions as an E3-type small ubiquitin-like modifier (SUMO) ligase, stabilizing the interaction between UBE2I and the substrate, and as a SUMO-tethering factor. Plays a crucial role as a transcriptional coregulation in various cellular pathways, including the STAT pathway, the p53 pathway and the steroid hormone signaling pathway. The effects of this transcriptional coregulation, transactivation or silencing may vary depending upon the biological context and PIAS2 isoform studied. However, it seems to be mostly involved in gene silencing. Binds to sumoylated ELK1 and enhances its transcriptional activity by preventing recruitment of HDAC2 by ELK1, thus reversing SUMO-mediated repression of ELK1 transactivation activity. Isoform PIASx-beta, but not isoform PIASx-alpha, promotes MDM2 sumoylation. Isoform PIASx-alpha promotes PARK7 sumoylation. Isoform PIASx-beta promotes NCOA2 sumoylation more efficiently than isoform PIASx-alpha. Sumoylates PML at'Lys-65' and 'Lys-160'. This is E3 SUMO-protein ligase PIAS2 (Pias2) from Mus musculus (Mouse).